The following is a 145-amino-acid chain: Histone H3-like centromeric protein A (145 aa).

A compositionally biased stretch (basic residues) spans 1–19; that stretch reads MPRHTSAHKRKPSTPRRRS. Residues 1–54 form a disordered region; that stretch reads MPRHTSAHKRKPSTPRRRSPPASLPPPAGSRTRRHSGPSGSSPRKKHKFRPGTR. A Phosphoserine modification is found at serine 19. The H3-like stretch occupies residues 51–145; sequence PGTRALMEIR…ARRIRGVEHM (95 aa).

This sequence belongs to the histone H3 family. As to quaternary structure, component of centromeric nucleosomes, where DNA is wrapped around a histone octamer core. The octamer contains two molecules each of H2A, H2B, CENPA and H4 assembled in one CENPA-H4 heterotetramer and two H2A-H2B heterodimers. CENPA modulates the DNA-binding characteristics of nucleosomes so that protruding DNA ends have higher flexibility than in nucleosomes containing conventional histone H3.

Its subcellular location is the nucleus. It localises to the chromosome. The protein resides in the centromere. Functionally, histone H3-like nucleosomal protein that is specifically found in centromeric nucleosomes. Replaces conventional H3 in the nucleosome core of centromeric chromatin that serves as an assembly site for the inner kinetochore. The presence of CENPA subtly modifies the nucleosome structure and the way DNA is wrapped around the nucleosome and gives rise to protruding DNA ends that are less well-ordered and rigid compared to nucleosomes containing histone H3. May serve as an epigenetic mark that propagates centromere identity through replication and cell division. Required for recruitment and assembly of kinetochore proteins, and as a consequence required for progress through mitosis, chromosome segregation and cytokinesis. This is Histone H3-like centromeric protein A (cenpa) from Danio rerio (Zebrafish).